Here is a 526-residue protein sequence, read N- to C-terminus: NAD(P)H-quinone oxidoreductase chain 4 (526 aa).

A run of 13 helical transmembrane segments spans residues 5–25, 32–52, 87–107, 111–131, 133–153, 165–185, 211–231, 239–259, 273–293, 302–320, 331–351, 371–393, and 414–434; these read FPWLTVIILLPLVAALAVPLI, WYSFAVCLVDFVLMVAAFFTS, LILLTGFITALATLAAWPVTL, MFHFLMLAMLAGMVGVFAVQD, VLFFLFFELELVPVYLMLAIW, FILYTAVGSLFILVVGLAMYF, FLGLLIAYAVKLPIFPLHTWL, TAPVHMLLAGILLKMGGYALI, FAPLLIVLGIVNIIYAALTSF, IAYSSISHMGFVLIGVGSL, QMISHGLIGASLFFLVGATYD, IFAMFTACSMASLALPGMSGFVA, and LVVLFAAFGVILTPIYLLSML.

This sequence belongs to the complex I subunit 4 family.

The protein resides in the cell inner membrane. It carries out the reaction a plastoquinone + NADH + (n+1) H(+)(in) = a plastoquinol + NAD(+) + n H(+)(out). The enzyme catalyses a plastoquinone + NADPH + (n+1) H(+)(in) = a plastoquinol + NADP(+) + n H(+)(out). Functionally, NDH-1 shuttles electrons from NAD(P)H, via FMN and iron-sulfur (Fe-S) centers, to quinones in the respiratory chain. The immediate electron acceptor for the enzyme in this species is believed to be plastoquinone. Couples the redox reaction to proton translocation (for every two electrons transferred, four hydrogen ions are translocated across the cytoplasmic membrane), and thus conserves the redox energy in a proton gradient. The sequence is that of NAD(P)H-quinone oxidoreductase chain 4 from Gloeobacter violaceus (strain ATCC 29082 / PCC 7421).